Consider the following 116-residue polypeptide: NADPH-dependent 7-cyano-7-deazaguanine reductase (116 aa).

The Thioimide intermediate role is filled by Cys-31. Catalysis depends on Asp-38, which acts as the Proton donor. Substrate-binding positions include 53–55 and 72–73; these read IEL and YE.

The protein belongs to the GTP cyclohydrolase I family. QueF type 1 subfamily.

It is found in the cytoplasm. The catalysed reaction is 7-aminomethyl-7-carbaguanine + 2 NADP(+) = 7-cyano-7-deazaguanine + 2 NADPH + 3 H(+). It functions in the pathway tRNA modification; tRNA-queuosine biosynthesis. Catalyzes the NADPH-dependent reduction of 7-cyano-7-deazaguanine (preQ0) to 7-aminomethyl-7-deazaguanine (preQ1). In Chlorobaculum parvum (strain DSM 263 / NCIMB 8327) (Chlorobium vibrioforme subsp. thiosulfatophilum), this protein is NADPH-dependent 7-cyano-7-deazaguanine reductase.